The following is a 61-amino-acid chain: U-poneritoxin(01)-Om5a (61 aa).

The signal sequence occupies residues 1–23 (MKLSALSLAFAIILMMTIMYTKA). Residues 24 to 41 (DADASADAEADADAEAEA) constitute a propeptide that is removed on maturation. Glutamine amide is present on Gln59.

This sequence belongs to the formicidae venom precursor-01 superfamily. In terms of processing, truncated sequences of this peptide have also been found in the venom. It is possible they have been cleaved in the venom. As to expression, expressed by the venom gland.

The protein localises to the secreted. In terms of biological role, acidic peptide with potent hemolytic activities (94.8% at 50 uM). It also shows low antimicrobial activities against E.coli (MIC=50uM), as well as histamine-releasing activity (28.3% at 10 uM). Does not have activity against S.aureus, and S.cerevisiae. The chain is U-poneritoxin(01)-Om5a from Odontomachus monticola (Trap-jaw ant).